A 188-amino-acid chain; its full sequence is dCTP deaminase (188 aa).

Residues 111–116 (KSTYAR), 135–137 (TLE), Gln156, Tyr170, and Gln180 contribute to the dCTP site. Glu137 serves as the catalytic Proton donor/acceptor.

Belongs to the dCTP deaminase family. As to quaternary structure, homotrimer.

It carries out the reaction dCTP + H2O + H(+) = dUTP + NH4(+). Its pathway is pyrimidine metabolism; dUMP biosynthesis; dUMP from dCTP (dUTP route): step 1/2. In terms of biological role, catalyzes the deamination of dCTP to dUTP. The protein is dCTP deaminase of Dichelobacter nodosus (strain VCS1703A).